The chain runs to 344 residues: UDP-N-acetylenolpyruvoylglucosamine reductase (344 aa).

In terms of domain architecture, FAD-binding PCMH-type spans Leu15–Ala185. Arg161 is an active-site residue. Ser231 functions as the Proton donor in the catalytic mechanism. Residue Glu327 is part of the active site.

Belongs to the MurB family. FAD is required as a cofactor.

It is found in the cytoplasm. The catalysed reaction is UDP-N-acetyl-alpha-D-muramate + NADP(+) = UDP-N-acetyl-3-O-(1-carboxyvinyl)-alpha-D-glucosamine + NADPH + H(+). It functions in the pathway cell wall biogenesis; peptidoglycan biosynthesis. Its function is as follows. Cell wall formation. This Haemophilus ducreyi (strain 35000HP / ATCC 700724) protein is UDP-N-acetylenolpyruvoylglucosamine reductase.